A 225-amino-acid chain; its full sequence is Uridylate kinase (225 aa).

Glycine 9–serine 10 is an ATP binding site. Position 46 (glycine 46) interacts with UMP. The ATP site is built by glycine 47 and arginine 51. UMP-binding positions include aspartate 67 and threonine 115–threonine 121. ATP-binding residues include threonine 141, asparagine 142, tyrosine 147, and aspartate 150.

It belongs to the UMP kinase family. As to quaternary structure, homohexamer.

It is found in the cytoplasm. It carries out the reaction UMP + ATP = UDP + ADP. It functions in the pathway pyrimidine metabolism; CTP biosynthesis via de novo pathway; UDP from UMP (UMPK route): step 1/1. Its activity is regulated as follows. Inhibited by UTP. In terms of biological role, catalyzes the reversible phosphorylation of UMP to UDP. In Methanococcus maripaludis (strain DSM 14266 / JCM 13030 / NBRC 101832 / S2 / LL), this protein is Uridylate kinase.